The chain runs to 447 residues: UDP-N-acetylmuramoylalanine--D-glutamate ligase (447 aa).

112 to 118 (GTNGKST) contributes to the ATP binding site.

This sequence belongs to the MurCDEF family.

The protein localises to the cytoplasm. It carries out the reaction UDP-N-acetyl-alpha-D-muramoyl-L-alanine + D-glutamate + ATP = UDP-N-acetyl-alpha-D-muramoyl-L-alanyl-D-glutamate + ADP + phosphate + H(+). It participates in cell wall biogenesis; peptidoglycan biosynthesis. Functionally, cell wall formation. Catalyzes the addition of glutamate to the nucleotide precursor UDP-N-acetylmuramoyl-L-alanine (UMA). This chain is UDP-N-acetylmuramoylalanine--D-glutamate ligase, found in Legionella pneumophila (strain Paris).